The primary structure comprises 493 residues: Glutamyl-tRNA(Gln) amidotransferase subunit A (493 aa).

Active-site charge relay system residues include K79 and S159. Catalysis depends on S183, which acts as the Acyl-ester intermediate.

The protein belongs to the amidase family. GatA subfamily. As to quaternary structure, heterotrimer of A, B and C subunits.

The catalysed reaction is L-glutamyl-tRNA(Gln) + L-glutamine + ATP + H2O = L-glutaminyl-tRNA(Gln) + L-glutamate + ADP + phosphate + H(+). Its function is as follows. Allows the formation of correctly charged Gln-tRNA(Gln) through the transamidation of misacylated Glu-tRNA(Gln) in organisms which lack glutaminyl-tRNA synthetase. The reaction takes place in the presence of glutamine and ATP through an activated gamma-phospho-Glu-tRNA(Gln). This is Glutamyl-tRNA(Gln) amidotransferase subunit A from Rhizobium etli (strain ATCC 51251 / DSM 11541 / JCM 21823 / NBRC 15573 / CFN 42).